Consider the following 95-residue polypeptide: Small ribosomal subunit protein uS14 (95 aa).

It belongs to the universal ribosomal protein uS14 family. Part of the 30S ribosomal subunit. Contacts proteins S3 and S10.

Its function is as follows. Binds 16S rRNA, required for the assembly of 30S particles and may also be responsible for determining the conformation of the 16S rRNA at the A site. This is Small ribosomal subunit protein uS14 from Fusobacterium nucleatum subsp. nucleatum (strain ATCC 25586 / DSM 15643 / BCRC 10681 / CIP 101130 / JCM 8532 / KCTC 2640 / LMG 13131 / VPI 4355).